The following is a 375-amino-acid chain: Alpha-1,2-galactosyltransferase (375 aa).

The Cytoplasmic portion of the chain corresponds to 1–2 (MR). Residues 3–23 (FAPYLISAVVITTIILGGAWW) traverse the membrane as a helical; Signal-anchor for type II membrane protein segment. Topologically, residues 24–375 (TSAMDTKLQT…HIQNLLKPSS (352 aa)) are lumenal.

The protein belongs to the glycosyltransferase 34 family. Post-translationally, O-glycosylated.

It localises to the golgi apparatus membrane. Functionally, involved in the O- and N-linked oligosaccharide modification of proteins transported through the Golgi stack. This occurs in cis Golgi where the enzyme transfers galactose from UDP-galactose to a variety of mannose based acceptors. The polypeptide is Alpha-1,2-galactosyltransferase (gma12) (Schizosaccharomyces pombe (strain 972 / ATCC 24843) (Fission yeast)).